The following is a 251-amino-acid chain: Triosephosphate isomerase (251 aa).

A substrate-binding site is contributed by 12–14; that stretch reads NWK. The active-site Electrophile is His-98. Glu-168 acts as the Proton acceptor in catalysis. Substrate-binding positions include Gly-174, Ser-213, and 234–235; that span reads GG.

It belongs to the triosephosphate isomerase family. Homodimer.

The protein localises to the cytoplasm. It catalyses the reaction D-glyceraldehyde 3-phosphate = dihydroxyacetone phosphate. Its pathway is carbohydrate biosynthesis; gluconeogenesis. It functions in the pathway carbohydrate degradation; glycolysis; D-glyceraldehyde 3-phosphate from glycerone phosphate: step 1/1. Its function is as follows. Involved in the gluconeogenesis. Catalyzes stereospecifically the conversion of dihydroxyacetone phosphate (DHAP) to D-glyceraldehyde-3-phosphate (G3P). This Afipia carboxidovorans (strain ATCC 49405 / DSM 1227 / KCTC 32145 / OM5) (Oligotropha carboxidovorans) protein is Triosephosphate isomerase.